A 432-amino-acid chain; its full sequence is Maltoporin (432 aa).

An N-terminal signal peptide occupies residues 1–22 (MKKVSVIAAAVAATLAAGSAFA).

It belongs to the porin LamB (TC 1.B.3) family. In terms of assembly, homotrimer formed of three 18-stranded antiparallel beta-barrels, containing three independent channels.

Its subcellular location is the cell outer membrane. It catalyses the reaction beta-maltose(in) = beta-maltose(out). Its function is as follows. Involved in the transport of maltose and maltodextrins. The polypeptide is Maltoporin (Vibrio parahaemolyticus serotype O3:K6 (strain RIMD 2210633)).